Here is a 369-residue protein sequence, read N- to C-terminus: Chorismate synthase (369 aa).

Residues R48 and R54 each coordinate NADP(+). FMN-binding positions include R125–S127, N238–A239, G278, K293–S297, and R319.

Belongs to the chorismate synthase family. As to quaternary structure, homotetramer. The cofactor is FMNH2.

The catalysed reaction is 5-O-(1-carboxyvinyl)-3-phosphoshikimate = chorismate + phosphate. It functions in the pathway metabolic intermediate biosynthesis; chorismate biosynthesis; chorismate from D-erythrose 4-phosphate and phosphoenolpyruvate: step 7/7. Its function is as follows. Catalyzes the anti-1,4-elimination of the C-3 phosphate and the C-6 proR hydrogen from 5-enolpyruvylshikimate-3-phosphate (EPSP) to yield chorismate, which is the branch point compound that serves as the starting substrate for the three terminal pathways of aromatic amino acid biosynthesis. This reaction introduces a second double bond into the aromatic ring system. The protein is Chorismate synthase of Cupriavidus necator (strain ATCC 17699 / DSM 428 / KCTC 22496 / NCIMB 10442 / H16 / Stanier 337) (Ralstonia eutropha).